The following is a 454-amino-acid chain: Glutamate mutase epsilon subunit (454 aa).

Arg-67 serves as a coordination point for L-glutamate. Gly-69 lines the adenosylcob(III)alamin pocket. Arg-99 contributes to the L-glutamate binding site. Asn-122 contacts adenosylcob(III)alamin. L-glutamate-binding positions include Arg-148 to His-149, Glu-170, and Tyr-176. Pro-179 is an adenosylcob(III)alamin binding site. Tyr-180 serves as a coordination point for L-glutamate. Residues Phe-296, Lys-325, Glu-329, and Ile-333 each contribute to the adenosylcob(III)alamin site.

The protein belongs to the methylaspartate mutase GlmE subunit family. As to quaternary structure, heterotetramer composed of 2 epsilon subunits (GlmE) and 2 sigma subunits (GlmS). GlmE exists as a homodimer and GlmS as a monomer. Adenosylcob(III)alamin is required as a cofactor.

The enzyme catalyses (2S,3S)-3-methyl-L-aspartate = L-glutamate. It participates in amino-acid degradation; L-glutamate degradation via mesaconate pathway; acetate and pyruvate from L-glutamate: step 1/4. Its function is as follows. Catalyzes the carbon skeleton rearrangement of L-glutamate to L-threo-3-methylaspartate ((2S,3S)-3-methylaspartate). The protein is Glutamate mutase epsilon subunit of Shigella dysenteriae serotype 1 (strain Sd197).